We begin with the raw amino-acid sequence, 173 residues long: Crossover junction endodeoxyribonuclease RuvC (173 aa).

Residues Asp-8, Glu-67, and Asp-139 contribute to the active site. Positions 8, 67, and 139 each coordinate Mg(2+).

The protein belongs to the RuvC family. In terms of assembly, homodimer which binds Holliday junction (HJ) DNA. The HJ becomes 2-fold symmetrical on binding to RuvC with unstacked arms; it has a different conformation from HJ DNA in complex with RuvA. In the full resolvosome a probable DNA-RuvA(4)-RuvB(12)-RuvC(2) complex forms which resolves the HJ. Requires Mg(2+) as cofactor.

The protein localises to the cytoplasm. It catalyses the reaction Endonucleolytic cleavage at a junction such as a reciprocal single-stranded crossover between two homologous DNA duplexes (Holliday junction).. In terms of biological role, the RuvA-RuvB-RuvC complex processes Holliday junction (HJ) DNA during genetic recombination and DNA repair. Endonuclease that resolves HJ intermediates. Cleaves cruciform DNA by making single-stranded nicks across the HJ at symmetrical positions within the homologous arms, yielding a 5'-phosphate and a 3'-hydroxyl group; requires a central core of homology in the junction. The consensus cleavage sequence is 5'-(A/T)TT(C/G)-3'. Cleavage occurs on the 3'-side of the TT dinucleotide at the point of strand exchange. HJ branch migration catalyzed by RuvA-RuvB allows RuvC to scan DNA until it finds its consensus sequence, where it cleaves and resolves the cruciform DNA. The sequence is that of Crossover junction endodeoxyribonuclease RuvC from Vibrio campbellii (strain ATCC BAA-1116).